The sequence spans 87 residues: uncharacterized protein (87 aa).

The helical transmembrane segment at 42 to 62 (LADALYSAGSAAFTIAASLVA) threads the bilayer.

Belongs to the SPP1 holin family.

It localises to the membrane. This is an uncharacterized protein from Bacillus licheniformis.